The primary structure comprises 367 residues: MMETQLYIGIMSGTSMDGADAVLIRMDGGKWLGAEGHAFTPYPGRLRRQLLDLQDTGADELHRSRILSQELSRLYAQTAAELLCSQNLAPSDITALGCHGQTVRHAPEHGYSIQLADLPLLAERTRIFTVGDFRSRDLAAGGQGAPLVPAFHEALFRDNRETRAVLNIGGIANISVLPPDAPAFGFDTGPGNMLMDAWTQAHWQLPYDKNGAKAAQGNILPQLLDRLLAHPYFAQPHPKSTGRELFALNWLETYLDGGENRYDVLRTLSRFTAQTVCDAVSHAAADARQMYICGGGIRNPVLMADLAECFGTRVSLHSTADLNLDPQWVEAAAFAWLAACWINRIPGSPHKATGASKPCILGAGYYY.

Position 13–20 (13–20) interacts with ATP; it reads GTSMDGAD.

Belongs to the anhydro-N-acetylmuramic acid kinase family.

The catalysed reaction is 1,6-anhydro-N-acetyl-beta-muramate + ATP + H2O = N-acetyl-D-muramate 6-phosphate + ADP + H(+). Its pathway is amino-sugar metabolism; 1,6-anhydro-N-acetylmuramate degradation. The protein operates within cell wall biogenesis; peptidoglycan recycling. Its function is as follows. Catalyzes the specific phosphorylation of 1,6-anhydro-N-acetylmuramic acid (anhMurNAc) with the simultaneous cleavage of the 1,6-anhydro ring, generating MurNAc-6-P. Is required for the utilization of anhMurNAc either imported from the medium or derived from its own cell wall murein, and thus plays a role in cell wall recycling. This chain is Anhydro-N-acetylmuramic acid kinase, found in Neisseria meningitidis serogroup B (strain ATCC BAA-335 / MC58).